Consider the following 552-residue polypeptide: uncharacterized protein (552 aa).

The 193-residue stretch at 8 to 200 (KLFADMIIQG…LLCVYEGFLK (193 aa)) folds into the DhaL domain.

This is an uncharacterized protein from Staphylococcus epidermidis (strain ATCC 12228 / FDA PCI 1200).